Here is a 951-residue protein sequence, read N- to C-terminus: Zinc fingers and homeoboxes protein 3 (951 aa).

The tract at residues 1–66 is disordered; that stretch reads MASKRKSTTP…SSTDGSALAN (66 aa). Residues 1 to 107 are required for nuclear localization; the sequence is MASKRKSTTP…SEHTDFNKDP (107 aa). Over residues 42 to 58 the composition is skewed to low complexity; that stretch reads PSEAPDASSEAAPNPSS. C2H2-type zinc fingers lie at residues 77–100 and 109–132; these read YCCKECEFRSQDVTHFIGHMNSEH and FVCTGCSFLAKNPEGLSLHNAKCH. The disordered stretch occupies residues 227–252; that stretch reads TFINGAAPGSQASAKSTKPPPAANGP. The required for homodimerization and interaction with NFYA stretch occupies residues 238-483; it reads ASAKSTKPPP…LLTACPSITS (246 aa). Residues 299–497 are required for repressor activity; it reads LSSIPTYNAA…DANIYKNKKS (199 aa). 2 DNA-binding regions (homeobox) span residues 300-359 and 489-548; these read SSIP…GISW and ANIY…RNLK. The segment at 492 to 550 is required for nuclear localization; it reads YKNKKSHEQLSALKGSFCRNQFPGQSEVEHLTKVTGLSTREVRKWFSDRRYHCRNLKGS. At S599 the chain carries Phosphoserine. The segment at residues 607–666 is a DNA-binding region (homeobox 3); the sequence is TPTKYKERAPEQLRVLENSFAQNPLPPEEELDRLRSETKMTRREIDGWFSERRKKVNTEE. Over residues 662 to 676 the composition is skewed to basic and acidic residues; sequence VNTEETKKADGHMPK. The disordered stretch occupies residues 662–690; the sequence is VNTEETKKADGHMPKEEEEGAEQEGRDEE. Residues 677-690 show a composition bias toward acidic residues; it reads EEEEGAEQEGRDEE. A phosphoserine mark is found at S703 and S718. DNA-binding regions (homeobox) lie at residues 759 to 818 and 830 to 889; these read PSKV…KNGQ and FPPG…TRAV. Residues 916–951 are disordered; it reads SELSENSESWEPSAPEASSEPFDTSSPQSGRQLEAD. Residues 919-936 are compositionally biased toward low complexity; that stretch reads SENSESWEPSAPEASSEP. Residues S922 and S941 each carry the phosphoserine modification. Residues 937–951 are compositionally biased toward polar residues; it reads FDTSSPQSGRQLEAD.

This sequence belongs to the ZHX family. Homodimer (via homeobox domain 1). Heterodimer with ZHX1 (via homeobox domain 1). Heterodimer with ZHX2 (via homeobox domain 1). Heterodimerization with ZHX1 is a prerequisite for repressor activity. Interacts with NFYA. As to expression, ubiquitously expressed.

It localises to the nucleus. Acts as a transcriptional repressor. Involved in the early stages of mesenchymal stem cell (MSC) osteogenic differentiation. Is a regulator of podocyte gene expression during primary glomerula disease. Binds to promoter DNA. This chain is Zinc fingers and homeoboxes protein 3 (Zhx3), found in Mus musculus (Mouse).